Reading from the N-terminus, the 646-residue chain is Phosphomethylpyrimidine synthase (646 aa).

Substrate is bound by residues Asn-235, Met-264, Tyr-293, His-329, 349 to 351, 390 to 393, and Glu-429; these read SRG and DGLR. A Zn(2+)-binding site is contributed by His-433. Substrate is bound at residue Tyr-456. Residue His-497 participates in Zn(2+) binding. [4Fe-4S] cluster-binding residues include Cys-577, Cys-580, and Cys-585. The segment at 624-646 is disordered; that stretch reads KSEEFRATGSELYHPAVHAEADE.

This sequence belongs to the ThiC family. Homodimer. [4Fe-4S] cluster serves as cofactor.

It carries out the reaction 5-amino-1-(5-phospho-beta-D-ribosyl)imidazole + S-adenosyl-L-methionine = 4-amino-2-methyl-5-(phosphooxymethyl)pyrimidine + CO + 5'-deoxyadenosine + formate + L-methionine + 3 H(+). It participates in cofactor biosynthesis; thiamine diphosphate biosynthesis. Catalyzes the synthesis of the hydroxymethylpyrimidine phosphate (HMP-P) moiety of thiamine from aminoimidazole ribotide (AIR) in a radical S-adenosyl-L-methionine (SAM)-dependent reaction. The chain is Phosphomethylpyrimidine synthase from Vibrio parahaemolyticus serotype O3:K6 (strain RIMD 2210633).